Consider the following 322-residue polypeptide: Eukaryotic translation initiation factor 3 subunit I (322 aa).

5 WD repeats span residues 4–43 (GHERSITQIKYNREGDLLFSCSKDQKPNVWYSLNGERLGT), 46–85 (GHQGAVWCLDVDWESRKLITGAGDMTTKIWDVEYGTIIAS), 141–180 (MTESKITSMLWGPLDETIITGHDNGNIAIWDIRKGQKVVD), 184–223 (DHTAGINDMQLSKDGTMFVTASKDTTAKLFDSESLMCLKT), and 281–322 (GHFG…NIFE).

This sequence belongs to the eIF-3 subunit I family. Component of the eukaryotic translation initiation factor 3 (eIF-3) complex. The eIF-3 complex interacts with pix.

It is found in the cytoplasm. In terms of biological role, component of the eukaryotic translation initiation factor 3 (eIF-3) complex, which is involved in protein synthesis of a specialized repertoire of mRNAs and, together with other initiation factors, stimulates binding of mRNA and methionyl-tRNAi to the 40S ribosome. The eIF-3 complex specifically targets and initiates translation of a subset of mRNAs involved in cell proliferation. This is Eukaryotic translation initiation factor 3 subunit I from Drosophila ananassae (Fruit fly).